Reading from the N-terminus, the 427-residue chain is MVKTDEVEKAYQVAKERYAEIGVDTEKAMEALKKVKLSVHCWQGDDIHGFLNPDQELTGGIGVSGDYPGIARTPDQLTGDLHEALSLIPGSHKVALHTLYAVTDKKKDFNEVGPEDFKYWVDWAKQEGIGLDMNPTFFSHPMVKHNFTLASPEKSVRDYWIEVGKKSREIANYFGQELGQQSVNNFWIPDGFKDNPIDKQAPRERLIESLDEVFAKKYDEKNTIEAVEGKLFGTGIESYTVGSHLFYNNYAISRGKLWTIDAGHWHPTEDVSDKFSAFMPFGKGLMLHVSRPIRWDSDHVVIFDEALQRITRSLVRDNELERTNIGLDFFDATINRVSAWVIGARATQKALLQAMLAPIDDLKKAELNYDFTKRLAVTEELKSFPFGAVWDEFCLKNNTPVGTDWLDEIHNYEQKVQFPRDKKVVTE.

Mn(2+) is bound by residues H264, D296, and D298.

This sequence belongs to the rhamnose isomerase family. Requires Mn(2+) as cofactor.

The protein localises to the cytoplasm. The catalysed reaction is L-rhamnopyranose = L-rhamnulose. It functions in the pathway carbohydrate degradation; L-rhamnose degradation; glycerone phosphate from L-rhamnose: step 1/3. Functionally, catalyzes the interconversion of L-rhamnose and L-rhamnulose. In Lactiplantibacillus plantarum (strain ATCC BAA-793 / NCIMB 8826 / WCFS1) (Lactobacillus plantarum), this protein is L-rhamnose isomerase.